The chain runs to 1393 residues: DNA glycosylase/AP lyase ROS1 (1393 aa).

Disordered regions lie at residues 1–25 (MEKQRREESSFQQPPWIPQTPMKPF), 98–186 (SLSS…TSTR), and 237–265 (LSAPSTPKRKRSQGKRKGVQPKKNGSNLE). The segment covering 98-108 (SLSSVSNNVAE) has biased composition (low complexity). Positions 117–126 (PKRKKHRPKV) are enriched in basic residues. Basic and acidic residues-rich tracts occupy residues 127-138 (RREAKPKREPKP) and 162-171 (KKVEVSKDQD). Residues 243–256 (PKRKRSQGKRKGVQ) are compositionally biased toward basic residues. The tract at residues 528–626 (KVDLDDETDR…AFMSLASQFP (99 aa)) is DEMETER. The segment covering 653 to 672 (EETMSSPPDHNHSSVTLKNT) has biased composition (polar residues). Disordered regions lie at residues 653–722 (EETM…SVEV) and 789–830 (SNQV…CSQQ). Positions 687–698 (SRSSSEIAISAH) are enriched in low complexity. Residues 699-722 (ESVDKTTDSKEYVDSDRKGSSVEV) are compositionally biased toward basic and acidic residues. Positions 816 to 830 (KSSVDSSEPGCCSQQ) are enriched in polar residues. A Glycyl lysine isopeptide (Lys-Gly) (interchain with G-Cter in ubiquitin) cross-link involves residue lysine 901. [4Fe-4S] cluster-binding residues include cysteine 1038, cysteine 1045, cysteine 1048, and cysteine 1054.

The protein belongs to the DNA glycosylase family. DEMETER subfamily. In terms of assembly, interacts (via the central region) with ZDP. Binds to RPA2A. Interacts with XRCC1. Interacts probably with a complex made of MBD7, IDM1, IDM2 and IDM3. Interacts with APE1L. [4Fe-4S] cluster serves as cofactor. In terms of tissue distribution, expressed ubiquitously in both vegetative and reproductive organs.

It is found in the nucleus. Its subcellular location is the nucleolus. The catalysed reaction is 2'-deoxyribonucleotide-(2'-deoxyribose 5'-phosphate)-2'-deoxyribonucleotide-DNA = a 3'-end 2'-deoxyribonucleotide-(2,3-dehydro-2,3-deoxyribose 5'-phosphate)-DNA + a 5'-end 5'-phospho-2'-deoxyribonucleoside-DNA + H(+). With respect to regulation, stimulated by ZDP. Stimulated by XRCC1. Bifunctional DNA glycosylase/lyase, which excises 5-methylcytosine (5-meC) and 5-hydroxymethylcytosine (5-hmeC), leaving an apyrimidinic (AP) site that is subsequently incised by the lyase activity. Generates 3'-phosphor-alpha,beta-unsaturated aldehyde (3'-PUA) as a primary 5-meC excision intermediate. Prevents DNA hypermethylation, specifically in the promoter of otherwise silenced loci. May be involved in DNA repair through its nicking activity on methylated DNA. Binds with similar affinity to both methylated and non-methylated DNA. Highly distributive behavior on DNA substrates containing multiple 5-meC residues. Involved with Pol IV in the remodeling of the 5S rDNA chromatin via DNA methylation modifications during the first days of development post-germination. Participates in UV-B induced- and oxidative DNA damage repair. This chain is DNA glycosylase/AP lyase ROS1, found in Arabidopsis thaliana (Mouse-ear cress).